The following is a 755-amino-acid chain: Proprotein convertase subtilisin/kexin type 4 (755 aa).

Positions 1 to 25 are cleaved as a signal peptide; it reads MRPAPIALWLRLVLALALVRPRAVG. Positions 26 to 113 are excised as a propeptide; that stretch reads WAPVRAPIYV…QQTLQRRVKR (88 aa). Residues 126–440 form the Peptidase S8 domain; that stretch reads QWYMNSEAQP…YGLLDAGLLV (315 aa). Residues D158, H199, and S373 each act as charge relay system in the active site. Positions 449-581 constitute a P/Homo B domain; sequence TQPQRKCAVR…TLLLYGTAED (133 aa). N475 and N629 each carry an N-linked (GlcNAc...) asparagine glycan. The chain crosses the membrane as a helical span at residues 709–729; it reads AMVLSLLAVTLGGPVLCGMSM.

The protein belongs to the peptidase S8 family. Furin subfamily. As to quaternary structure, the proPCSK4 form interacts with HSPA5; the interaction takes place at the endoplasmic reticulum. Post-translationally, N-glycosylated. In terms of processing, synthesized in the endoplasmic reticulum as a zymogen, is matured by autocatalytic cleavage between the prodomain and the catalytic domain. Placenta.

It is found in the membrane. It localises to the cytoplasmic vesicle. Its subcellular location is the secretory vesicle. The protein localises to the acrosome membrane. Its function is as follows. Proprotein convertase involved in the processing of hormone and other protein precursors at sites comprised of pairs of basic amino acid residues. In males, important for ADAM2 processing as well as other acrosomal proteins with roles in fertilization and critical for normal fertilization events such as sperm capacitation, acrosome reaction and binding of sperm to zona pellucida. Also plays a role in female fertility, involved in the regulation of trophoblast migration and placental development, may be through the proteolytical processing and activation of proteins such as IGF2. May also participate in folliculogenesis in the ovaries. In Homo sapiens (Human), this protein is Proprotein convertase subtilisin/kexin type 4.